The sequence spans 727 residues: NADH-ubiquinone oxidoreductase 75 kDa subunit, mitochondrial (727 aa).

Residues 1 to 23 (MLRIPVRKALVVLSKSPKGCVRT) constitute a mitochondrion transit peptide. The 2Fe-2S ferredoxin-type domain occupies 30-108 (NLIEVFVDGQ…GWNILTNSKK (79 aa)). [2Fe-2S] cluster contacts are provided by cysteine 64, cysteine 75, and cysteine 78. Position 84 is an N6-acetyllysine (lysine 84). Residue cysteine 92 coordinates [2Fe-2S] cluster. The 40-residue stretch at 108 to 147 (KSKKAREGVMEFLLANHPLDCPICDQGGECDLQDQSMMFG) folds into the 4Fe-4S His(Cys)3-ligated-type domain. Residues histidine 124, cysteine 128, cysteine 131, cysteine 137, cysteine 176, cysteine 179, cysteine 182, and cysteine 226 each coordinate [4Fe-4S] cluster. The region spanning 245-301 (TRKTESIDVMDAVGSNIVVSTRTGEVMRILPRMHEDINEEWISDKTRFAYDGLKRQR) is the 4Fe-4S Mo/W bis-MGD-type domain. N6-acetyllysine occurs at positions 467, 499, and 709.

This sequence belongs to the complex I 75 kDa subunit family. In terms of assembly, core subunit of respiratory chain NADH dehydrogenase (Complex I) which is composed of 45 different subunits. This is the largest subunit of complex I and it is a component of the iron-sulfur (IP) fragment of the enzyme. Complex I associates with ubiquinol-cytochrome reductase complex (Complex III) to form supercomplexes. Interacts with MDM2 and AKAP1. It depends on [2Fe-2S] cluster as a cofactor. [4Fe-4S] cluster is required as a cofactor.

It localises to the mitochondrion inner membrane. The catalysed reaction is a ubiquinone + NADH + 5 H(+)(in) = a ubiquinol + NAD(+) + 4 H(+)(out). Core subunit of the mitochondrial membrane respiratory chain NADH dehydrogenase (Complex I) which catalyzes electron transfer from NADH through the respiratory chain, using ubiquinone as an electron acceptor. Essential for catalysing the entry and efficient transfer of electrons within complex I. Plays a key role in the assembly and stability of complex I and participates in the association of complex I with ubiquinol-cytochrome reductase complex (Complex III) to form supercomplexes. This Pan troglodytes (Chimpanzee) protein is NADH-ubiquinone oxidoreductase 75 kDa subunit, mitochondrial (NDUFS1).